The primary structure comprises 33 residues: Photosystem II reaction center protein Psb30 (33 aa).

A helical membrane pass occupies residues 5–25 (LIVQLGSLALITVAGPAIIVL).

This sequence belongs to the Psb30/Ycf12 family. As to quaternary structure, PSII is composed of 1 copy each of membrane proteins PsbA, PsbB, PsbC, PsbD, PsbE, PsbF, PsbH, PsbI, PsbJ, PsbK, PsbL, PsbM, PsbT, PsbY, PsbZ, Psb30/Ycf12, peripheral proteins of the oxygen-evolving complex and a large number of cofactors. It forms dimeric complexes.

It is found in the plastid. It localises to the chloroplast thylakoid membrane. Functionally, a core subunit of photosystem II (PSII), probably helps stabilize the reaction center. This Euglena stellata protein is Photosystem II reaction center protein Psb30.